The sequence spans 277 residues: Diaminopimelate epimerase (277 aa).

The substrate site is built by N17, Q50, and N68. C77 serves as the catalytic Proton donor. Residues 78 to 79, N162, N195, and 213 to 214 contribute to the substrate site; these read GN and ER. C222 (proton acceptor) is an active-site residue. 223-224 contacts substrate; that stretch reads GT.

It belongs to the diaminopimelate epimerase family. Homodimer.

The protein resides in the cytoplasm. It carries out the reaction (2S,6S)-2,6-diaminopimelate = meso-2,6-diaminopimelate. It functions in the pathway amino-acid biosynthesis; L-lysine biosynthesis via DAP pathway; DL-2,6-diaminopimelate from LL-2,6-diaminopimelate: step 1/1. Its function is as follows. Catalyzes the stereoinversion of LL-2,6-diaminopimelate (L,L-DAP) to meso-diaminopimelate (meso-DAP), a precursor of L-lysine and an essential component of the bacterial peptidoglycan. The polypeptide is Diaminopimelate epimerase (Phenylobacterium zucineum (strain HLK1)).